A 208-amino-acid chain; its full sequence is MKPKFIVIEGLEGAGKSTAIALCQSFLNSKKIDFINVREPGGTPLAESLRTLVKAQHDEEIAFETELLIMYAARSQLMHNVINPALEQGQWVLADRHDLSSQAYQGGGRGISANTLASLSSMVLKGLKPDLTIYLDIDPVIGLERAKGRGELDRIEQEAIEFFQRTRMRYLELANDDNSIKTVDANQSIEHVHRDITNVLRTFFAEQK.

ATP is bound at residue 10–17 (GLEGAGKS).

Belongs to the thymidylate kinase family.

It catalyses the reaction dTMP + ATP = dTDP + ADP. Its function is as follows. Phosphorylation of dTMP to form dTDP in both de novo and salvage pathways of dTTP synthesis. This chain is Thymidylate kinase, found in Pseudoalteromonas translucida (strain TAC 125).